The following is a 388-amino-acid chain: Chaperone protein DnaJ 1 (388 aa).

A J domain is found at 10 to 74 (DFYKELGVSS…VKRKEYDETR (65 aa)). The segment at 159–237 (GVAMPLRLTS…CKGTGVTTRT (79 aa)) adopts a CR-type zinc-finger fold. Positions 172, 175, 189, 192, 211, 214, 225, and 228 each coordinate Zn(2+). CXXCXGXG motif repeat units follow at residues 172–179 (CTNCHGSG), 189–196 (CSTCNGSG), 211–218 (CTECRGSG), and 225–232 (CEECKGTG).

The protein belongs to the DnaJ family. As to quaternary structure, homodimer. Zn(2+) is required as a cofactor.

It is found in the cytoplasm. Functionally, participates actively in the response to hyperosmotic and heat shock by preventing the aggregation of stress-denatured proteins and by disaggregating proteins, also in an autonomous, DnaK-independent fashion. Unfolded proteins bind initially to DnaJ; upon interaction with the DnaJ-bound protein, DnaK hydrolyzes its bound ATP, resulting in the formation of a stable complex. GrpE releases ADP from DnaK; ATP binding to DnaK triggers the release of the substrate protein, thus completing the reaction cycle. Several rounds of ATP-dependent interactions between DnaJ, DnaK and GrpE are required for fully efficient folding. Also involved, together with DnaK and GrpE, in the DNA replication of plasmids through activation of initiation proteins. In Mycobacterium leprae (strain TN), this protein is Chaperone protein DnaJ 1.